A 216-amino-acid polypeptide reads, in one-letter code: Superoxide dismutase [Cu-Zn], chloroplastic (216 aa).

The transit peptide at 1–62 directs the protein to the chloroplast; the sequence is MACHSALAAV…ASPRSMVVVA (62 aa). Cu cation is bound by residues His108, His110, and His125. The cysteines at positions 119 and 208 are disulfide-linked. The Zn(2+) site is built by His125, His133, His142, and Asp145. Residue His182 participates in Cu cation binding.

This sequence belongs to the Cu-Zn superoxide dismutase family. Homotetramer. Cu cation is required as a cofactor. Zn(2+) serves as cofactor.

Its subcellular location is the plastid. It localises to the chloroplast. It carries out the reaction 2 superoxide + 2 H(+) = H2O2 + O2. Functionally, destroys radicals which are normally produced within the cells and which are toxic to biological systems. In Zantedeschia aethiopica (White calla lily), this protein is Superoxide dismutase [Cu-Zn], chloroplastic (SODCP).